The sequence spans 191 residues: CASP-like protein 2U3 (191 aa).

Residues 1–25 (MGAYDGAEAPRAAPASTAANSRPSR) lie on the Cytoplasmic side of the membrane. The helical transmembrane segment at 26–46 (LLLLHSLLLRLVAVVVSILVI) threads the bilayer. Topologically, residues 47 to 68 (AVMVHAKQRVMIFKAEWDNSKA) are extracellular. The chain crosses the membrane as a helical span at residues 69–89 (FVALVAISAICLGYSFLQFIL). The Cytoplasmic segment spans residues 90–114 (SAFHLCSKSWKSPTKCWAWMNFIAD). Residues 115 to 135 (QILTYAMLGAAAAAAELAYIA) form a helical membrane-spanning segment. The Extracellular portion of the chain corresponds to 136-157 (KNGSSRAQWQPICSTFNTFCTR). Asn137 carries N-linked (GlcNAc...) asparagine glycosylation. Residues 158 to 178 (AGASIILSFIAVLALANSSAI) traverse the membrane as a helical segment. Residues 179-191 (SAYHLFRRPSSSV) are Cytoplasmic-facing.

The protein belongs to the Casparian strip membrane proteins (CASP) family. In terms of assembly, homodimer and heterodimers.

It is found in the cell membrane. This Selaginella moellendorffii (Spikemoss) protein is CASP-like protein 2U3.